A 203-amino-acid chain; its full sequence is Kunitz trypsin inhibitor 6 (203 aa).

Positions 1–21 (MKTFQLMMISFLFVAITTTSG) are cleaved as a signal peptide. Cysteine 70 and cysteine 115 are oxidised to a cystine. Residues asparagine 94, asparagine 127, asparagine 136, asparagine 144, and asparagine 197 are each glycosylated (N-linked (GlcNAc...) asparagine).

It belongs to the protease inhibitor I3 (leguminous Kunitz-type inhibitor) family.

In terms of biological role, exhibits Kunitz trypsin protease inhibitor activity. The chain is Kunitz trypsin inhibitor 6 from Arabidopsis thaliana (Mouse-ear cress).